The following is a 148-amino-acid chain: UPF0178 protein SUN_1096 (148 aa).

It belongs to the UPF0178 family.

This chain is UPF0178 protein SUN_1096, found in Sulfurovum sp. (strain NBC37-1).